A 648-amino-acid polypeptide reads, in one-letter code: Acetyl-coenzyme A synthetase (648 aa).

CoA contacts are provided by residues 190–193, threonine 308, and asparagine 332; that span reads RGGK. Residues 384-386, 408-413, aspartate 497, and arginine 512 each bind ATP; these read GEP and DTWWQT. Serine 520 contributes to the CoA binding site. Position 523 (arginine 523) interacts with ATP. Residues valine 534, histidine 536, and valine 539 each contribute to the Mg(2+) site. Arginine 581 contacts CoA. Lysine 606 is subject to N6-acetyllysine.

Belongs to the ATP-dependent AMP-binding enzyme family. It depends on Mg(2+) as a cofactor. Acetylated. Deacetylation by the SIR2-homolog deacetylase activates the enzyme.

It catalyses the reaction acetate + ATP + CoA = acetyl-CoA + AMP + diphosphate. Its function is as follows. Catalyzes the conversion of acetate into acetyl-CoA (AcCoA), an essential intermediate at the junction of anabolic and catabolic pathways. AcsA undergoes a two-step reaction. In the first half reaction, AcsA combines acetate with ATP to form acetyl-adenylate (AcAMP) intermediate. In the second half reaction, it can then transfer the acetyl group from AcAMP to the sulfhydryl group of CoA, forming the product AcCoA. The protein is Acetyl-coenzyme A synthetase of Bradyrhizobium diazoefficiens (strain JCM 10833 / BCRC 13528 / IAM 13628 / NBRC 14792 / USDA 110).